The chain runs to 419 residues: Serine hydroxymethyltransferase 2 (419 aa).

(6S)-5,6,7,8-tetrahydrofolate contacts are provided by residues Leu-120 and 124 to 126 (GHL). Lys-229 bears the N6-(pyridoxal phosphate)lysine mark.

Belongs to the SHMT family. Homodimer. It depends on pyridoxal 5'-phosphate as a cofactor.

Its subcellular location is the cytoplasm. The enzyme catalyses (6R)-5,10-methylene-5,6,7,8-tetrahydrofolate + glycine + H2O = (6S)-5,6,7,8-tetrahydrofolate + L-serine. The protein operates within one-carbon metabolism; tetrahydrofolate interconversion. It participates in amino-acid biosynthesis; glycine biosynthesis; glycine from L-serine: step 1/1. Functionally, catalyzes the reversible interconversion of serine and glycine with tetrahydrofolate (THF) serving as the one-carbon carrier. This reaction serves as the major source of one-carbon groups required for the biosynthesis of purines, thymidylate, methionine, and other important biomolecules. Also exhibits THF-independent aldolase activity toward beta-hydroxyamino acids, producing glycine and aldehydes, via a retro-aldol mechanism. The protein is Serine hydroxymethyltransferase 2 of Salmonella typhi.